A 273-amino-acid polypeptide reads, in one-letter code: Anthranilate synthase beta subunit 2, chloroplastic (273 aa).

The transit peptide at 1 to 36 directs the protein to the chloroplast; sequence MAATTLYNSCLLQPKYGFTTRRLNQSLVNSLTNPTR. The region spanning 71–270 is the Glutamine amidotransferase type-1 domain; the sequence is PIIVIDNYDS…IKLVEKKESE (200 aa). Catalysis depends on Cys-149, which acts as the Nucleophile. Active-site residues include His-244 and Glu-246.

As to quaternary structure, heterotetramer consisting of two non-identical subunits: a beta subunit and a large alpha subunit.

The protein resides in the plastid. Its subcellular location is the chloroplast. The enzyme catalyses chorismate + L-glutamine = anthranilate + pyruvate + L-glutamate + H(+). Its pathway is amino-acid biosynthesis; L-tryptophan biosynthesis; L-tryptophan from chorismate: step 1/5. Its activity is regulated as follows. Feedback inhibition by tryptophan. In terms of biological role, part of a heterotetrameric complex that catalyzes the two-step biosynthesis of anthranilate, an intermediate in the biosynthesis of L-tryptophan. In the first step, the glutamine-binding beta subunit of anthranilate synthase (AS) provides the glutamine amidotransferase activity which generates ammonia as a substrate that, along with chorismate, is used in the second step, catalyzed by the large alpha subunit of AS to produce anthranilate. The chain is Anthranilate synthase beta subunit 2, chloroplastic (ASB2) from Arabidopsis thaliana (Mouse-ear cress).